Consider the following 347-residue polypeptide: Guanine nucleotide-binding protein alpha-6 subunit (347 aa).

The G-alpha domain maps to 30–347 (GITQVLLLGA…IIVGHVMDLV (318 aa)). The tract at residues 33 to 46 (QVLLLGAGESGKST) is G1 motif. Residues 38 to 45 (GAGESGKS), 172 to 178 (LRARVTT), 197 to 201 (DVGGQ), 266 to 269 (NKKD), and Ala322 each bind GTP. Ser45 and Thr178 together coordinate Mg(2+). Residues 170–178 (DALRARVTT) form a G2 motif region. Residues 193–202 (MKIIDVGGQR) are G3 motif. The tract at residues 262 to 269 (ILFLNKKD) is G4 motif. The interval 320–325 (TIAVDT) is G5 motif.

Belongs to the G-alpha family. In terms of assembly, g proteins are composed of 3 units; alpha, beta and gamma. The alpha chain contains the guanine nucleotide binding site.

Its function is as follows. Guanine nucleotide-binding proteins (G proteins) are involved as modulators or transducers in various transmembrane signaling systems. G alpha-6 is involved in the folic acid chemotaxis signal transduction pathway. In Dictyostelium discoideum (Social amoeba), this protein is Guanine nucleotide-binding protein alpha-6 subunit (gpaF).